Reading from the N-terminus, the 156-residue chain is MQASRSPDDLVKTFKSILKEERFGSQSEIVNALQAEGFSNINQSKVSRMLSKFGAVRTRNAKQEMVYCLPAELGVPTAGSPLKNLVLDVDHNQSMIVVRTSPGAAQLIARLLDSIGKPEGILGTIAGDDTIFICPSSIHSIEDTLETVKSLFNYAD.

The protein belongs to the ArgR family.

The protein localises to the cytoplasm. It participates in amino-acid biosynthesis; L-arginine biosynthesis [regulation]. Its function is as follows. Regulates arginine biosynthesis genes. The sequence is that of Arginine repressor from Shewanella pealeana (strain ATCC 700345 / ANG-SQ1).